Reading from the N-terminus, the 363-residue chain is Chorismate synthase (363 aa).

Residue R47 coordinates NADP(+). FMN-binding positions include 124–126, G286, 301–305, and R327; these read RAS and KPTAT.

It belongs to the chorismate synthase family. As to quaternary structure, homotetramer. The cofactor is FMNH2.

It catalyses the reaction 5-O-(1-carboxyvinyl)-3-phosphoshikimate = chorismate + phosphate. It participates in metabolic intermediate biosynthesis; chorismate biosynthesis; chorismate from D-erythrose 4-phosphate and phosphoenolpyruvate: step 7/7. Its function is as follows. Catalyzes the anti-1,4-elimination of the C-3 phosphate and the C-6 proR hydrogen from 5-enolpyruvylshikimate-3-phosphate (EPSP) to yield chorismate, which is the branch point compound that serves as the starting substrate for the three terminal pathways of aromatic amino acid biosynthesis. This reaction introduces a second double bond into the aromatic ring system. This is Chorismate synthase from Prochlorococcus marinus (strain MIT 9211).